Consider the following 276-residue polypeptide: Large ribosomal subunit protein uL2 (276 aa).

Disordered regions lie at residues 38–59 (FQKSGRNNNGHITTRHKGGGHK) and 225–276 (VMNP…RHKR). Over residues 39 to 49 (QKSGRNNNGHI) the composition is skewed to polar residues. Positions 50–59 (TTRHKGGGHK) are enriched in basic residues.

Belongs to the universal ribosomal protein uL2 family. In terms of assembly, part of the 50S ribosomal subunit. Forms a bridge to the 30S subunit in the 70S ribosome.

One of the primary rRNA binding proteins. Required for association of the 30S and 50S subunits to form the 70S ribosome, for tRNA binding and peptide bond formation. It has been suggested to have peptidyltransferase activity; this is somewhat controversial. Makes several contacts with the 16S rRNA in the 70S ribosome. This Cupriavidus necator (strain ATCC 17699 / DSM 428 / KCTC 22496 / NCIMB 10442 / H16 / Stanier 337) (Ralstonia eutropha) protein is Large ribosomal subunit protein uL2.